We begin with the raw amino-acid sequence, 194 residues long: NADH-ubiquinone oxidoreductase subunit NUO2 (194 aa).

Functionally, fungal-specific subunit of the mitochondrial membrane respiratory chain NADH dehydrogenase (Complex I). Complex I functions in the transfer of electrons from NADH to the respiratory chain. The immediate electron acceptor for the enzyme is believed to be ubiquinone. Plays a role in cell wall integrity and is involved in osmotic and oxidative resistance, yeast to hypha transition, and virulence via providing the ability to damage and invade host cells such as oral epithelial cells. The chain is NADH-ubiquinone oxidoreductase subunit NUO2 from Candida albicans (strain SC5314 / ATCC MYA-2876) (Yeast).